The primary structure comprises 442 residues: MEKDKHSHFYNQRGDFRTEYNMLEELENKLINSRKTERAKIQQQLAKIHNNVKKLQNQLKDVKPTPDVVEKLREMMEEIENAINTFKEEQRLIYEELIQEEKTTNNELSAVSRRIESWALGNSETEKAFRAISSKVPVDRVTQRTLPEQVVEFEKFLQQTGGRQGGWDALDHQNFVKVRNKHKGKPTFMKEVVEHLPGRTLDEVQQHEKWYQKFLTLEEKKKESIQNWKTKKQQKKEEILKLKEKVDTVPLPSQSKAEDSPKQREEQRKKQKLAVEAWKKRKSLEMSAKLASQLREEEEKERKQQRERQRQSKLKLLLESYTQQRREQEEFLRLEQEIKEKAEKAEKRKTAADELARFQERDLHKLELKILDRQAKEEEKAEKQRRLTKLKEKVENNVSRDPSRLYKPTKGWEERTKKIGPSGSGPLLHIPHRAIPTWRQGI.

Coiled-coil stretches lie at residues 23–116 (LEEL…RRIE) and 217–249 (LEEK…VDTV). Disordered stretches follow at residues 245–272 (KVDT…KKQK), 289–312 (KLAS…QRQS), and 392–442 (EKVE…RQGI). 2 stretches are compositionally biased toward basic and acidic residues: residues 256–268 (KAED…EEQR) and 294–310 (LREE…ERQR). Residues 281-400 (RKSLEMSAKL…KEKVENNVSR (120 aa)) adopt a coiled-coil conformation.

The protein resides in the cytoplasm. It localises to the cytoskeleton. The protein localises to the microtubule organizing center. Its subcellular location is the centrosome. It is found in the centriolar satellite. The polypeptide is Coiled-coil domain-containing protein 112 (Ccdc112) (Mus musculus (Mouse)).